A 430-amino-acid polypeptide reads, in one-letter code: Trigger factor (430 aa).

The PPIase FKBP-type domain maps to 163–248; the sequence is GNIAIIDFKG…IKDIKVKELP (86 aa).

The protein belongs to the FKBP-type PPIase family. Tig subfamily.

Its subcellular location is the cytoplasm. It carries out the reaction [protein]-peptidylproline (omega=180) = [protein]-peptidylproline (omega=0). Involved in protein export. Acts as a chaperone by maintaining the newly synthesized protein in an open conformation. Functions as a peptidyl-prolyl cis-trans isomerase. The polypeptide is Trigger factor (Clostridium botulinum (strain Kyoto / Type A2)).